The sequence spans 283 residues: Protein BASIC PENTACYSTEINE1 (283 aa).

Positions 111-170 (RFEENPIPPPAPCEEQTGKKRKMRGSIATPTVPKAKKMRKPKEERDVTNNNVQQQQQRVK) are disordered. A compositionally biased stretch (low complexity) spans 158–169 (TNNNVQQQQQRV).

Belongs to the BBR/BPC family. In terms of tissue distribution, expressed in seedlings, leaves and pistils. Detected in the base of flowers and tips of carpels, in leaf and sepal vasculature, in young rosette, in the lateral and tip of primary roots, and in the whole ovule.

It is found in the nucleus. Transcriptional regulator that specifically binds to GA-rich elements (GAGA-repeats) present in regulatory sequences of genes involved in developmental processes. Negatively regulates the homeotic gene AGL11/STK, which controls ovule primordium identity, by a cooperative binding to purine-rich elements present in the regulatory sequence leading to DNA conformational changes. This is Protein BASIC PENTACYSTEINE1 (BPC1) from Arabidopsis thaliana (Mouse-ear cress).